A 179-amino-acid chain; its full sequence is Inner membrane-spanning protein YciB (179 aa).

5 helical membrane passes run Ile11–Ile31, Leu52–Asn69, Leu71–Val91, Leu121–Leu141, and Phe149–Ile169.

It belongs to the YciB family.

The protein resides in the cell inner membrane. In terms of biological role, plays a role in cell envelope biogenesis, maintenance of cell envelope integrity and membrane homeostasis. The polypeptide is Inner membrane-spanning protein YciB (Histophilus somni (strain 129Pt) (Haemophilus somnus)).